The following is a 382-amino-acid chain: GDP-mannose transporter (382 aa).

Residues M1–Q40 are Cytoplasmic-facing. Residues L41–V61 form a helical membrane-spanning segment. Over M62–D71 the chain is Lumenal. A helical transmembrane segment spans residues F72–T92. The Cytoplasmic segment spans residues C93–K110. Residues K111–S127 traverse the membrane as a helical segment. Residues K128 to S134 are Lumenal-facing. The helical transmembrane segment at I135–Y151 threads the bilayer. Topologically, residues G152–S160 are cytoplasmic. A helical membrane pass occupies residues V161–A182. The Lumenal portion of the chain corresponds to D183–T200. The helical transmembrane segment at L201–G221 threads the bilayer. At M222–D233 the chain is on the cytoplasmic side. A helical transmembrane segment spans residues F234 to L254. Residues M255–G274 are Lumenal-facing. A helical transmembrane segment spans residues I275–W295. Residues C296–T303 lie on the Cytoplasmic side of the membrane. A helical transmembrane segment spans residues T304–F324. The Lumenal segment spans residues D325–P327. Residues V328–V348 form a helical membrane-spanning segment. The Cytoplasmic segment spans residues A349–S382. The disordered stretch occupies residues K358 to S382. Polar residues predominate over residues P367–S382.

The protein belongs to the TPT transporter family. SLC35D subfamily. In terms of assembly, homooligomer.

Its subcellular location is the golgi apparatus membrane. The protein localises to the cytoplasmic vesicle membrane. It localises to the endoplasmic reticulum membrane. Involved in the import of GDP-mannose from the cytoplasm into the Golgi lumen. This is GDP-mannose transporter (gmt1) from Aspergillus fumigatus (strain CBS 144.89 / FGSC A1163 / CEA10) (Neosartorya fumigata).